The sequence spans 163 residues: Cytosolic iron-sulfur assembly component 2B (163 aa).

Belongs to the MIP18 family. In terms of assembly, component of the CIA complex. Component of the MMXD complex, which includes CIAO1, ERCC2, CIAO2B, MMS19 and SLC25A5. Interacts with CIAO1, ERCC2 and MMS19; the interactions are direct. Interacts with KIF4A; the interaction facilitates the transfer of Fe-S clusters to KIF4A to ensure proper localization of KIF4A to the mitotic machinery. Interacts with CCDC117; the interaction is direct.

Its subcellular location is the nucleus. It is found in the cytoplasm. The protein resides in the cytoskeleton. It localises to the spindle. In terms of biological role, component of the cytosolic iron-sulfur protein assembly (CIA) complex, a multiprotein complex that mediates the incorporation of iron-sulfur cluster into extramitochondrial Fe/S proteins. As a CIA complex component and in collaboration with CIAO1 and MMS19, binds to and facilitates the assembly of most cytosolic-nuclear Fe/S proteins. As part of the mitotic spindle-associated MMXD complex it plays a role in chromosome segregation, probably by facilitating iron-sulfur cluster assembly into ERCC2/XPD. Together with MMS19, facilitates the transfer of Fe-S clusters to the motor protein KIF4A, which ensures proper localization of KIF4A to mitotic machinery components to promote the progression of mitosis. The sequence is that of Cytosolic iron-sulfur assembly component 2B from Mus musculus (Mouse).